Here is a 119-residue protein sequence, read N- to C-terminus: Protein yippee-like 3 (119 aa).

The region spanning R19–N116 is the Yippee domain. Positions 23, 26, 79, and 82 each coordinate Zn(2+).

The protein belongs to the yippee family.

The protein localises to the nucleus. It is found in the nucleolus. Functionally, may be involved in proliferation and apoptosis in myeloid precursor cells. This chain is Protein yippee-like 3 (ypel3), found in Danio rerio (Zebrafish).